Reading from the N-terminus, the 276-residue chain is Putative translation initiation factor eIF-2B subunit 2-like (276 aa).

Belongs to the eIF-2B alpha/beta/delta subunits family. As to quaternary structure, complex of two different subunits.

Catalyzes the exchange of initiation factor 2-bound GDP for GTP. In Pyrococcus horikoshii (strain ATCC 700860 / DSM 12428 / JCM 9974 / NBRC 100139 / OT-3), this protein is Putative translation initiation factor eIF-2B subunit 2-like.